Consider the following 99-residue polypeptide: Large ribosomal subunit protein uL23 (99 aa).

The protein belongs to the universal ribosomal protein uL23 family. In terms of assembly, part of the 50S ribosomal subunit. Contacts protein L29, and trigger factor when it is bound to the ribosome.

Its function is as follows. One of the early assembly proteins it binds 23S rRNA. One of the proteins that surrounds the polypeptide exit tunnel on the outside of the ribosome. Forms the main docking site for trigger factor binding to the ribosome. The chain is Large ribosomal subunit protein uL23 from Shewanella woodyi (strain ATCC 51908 / MS32).